The primary structure comprises 183 residues: Ferritin heavy polypeptide-like 17 (183 aa).

The Ferritin-like diiron domain maps to 11 to 160 (QKYDTNCDAA…GYVSNLRKIC (150 aa)). Residues glutamate 28, histidine 66, glutamate 108, and glutamine 142 each contribute to the Fe cation site.

Belongs to the ferritin family. As to expression, testis specific. Also expressed in several cancers.

The chain is Ferritin heavy polypeptide-like 17 (FTHL17) from Homo sapiens (Human).